A 384-amino-acid chain; its full sequence is Chorismate synthase (384 aa).

The NADP(+) site is built by R39 and R45. FMN-binding positions include 130–132 (RSS), 248–249 (NA), G292, 307–311 (KPIPT), and R333.

Belongs to the chorismate synthase family. In terms of assembly, homotetramer. Requires FMNH2 as cofactor.

The catalysed reaction is 5-O-(1-carboxyvinyl)-3-phosphoshikimate = chorismate + phosphate. The protein operates within metabolic intermediate biosynthesis; chorismate biosynthesis; chorismate from D-erythrose 4-phosphate and phosphoenolpyruvate: step 7/7. Its function is as follows. Catalyzes the anti-1,4-elimination of the C-3 phosphate and the C-6 proR hydrogen from 5-enolpyruvylshikimate-3-phosphate (EPSP) to yield chorismate, which is the branch point compound that serves as the starting substrate for the three terminal pathways of aromatic amino acid biosynthesis. This reaction introduces a second double bond into the aromatic ring system. The chain is Chorismate synthase from Exiguobacterium sibiricum (strain DSM 17290 / CCUG 55495 / CIP 109462 / JCM 13490 / 255-15).